We begin with the raw amino-acid sequence, 493 residues long: Dipeptide permease D (493 aa).

A run of 13 helical transmembrane segments spans residues V14–L34, A49–A69, L91–V111, G138–C158, W167–C187, N212–W232, W235–Y255, L267–G287, M312–I332, I344–L364, L379–M399, V413–I433, and V458–L478.

The protein belongs to the major facilitator superfamily. Proton-dependent oligopeptide transporter (POT/PTR) (TC 2.A.17) family. DtpD subfamily.

It is found in the cell inner membrane. Its function is as follows. Probable proton-dependent permease that transports dipeptides. The chain is Dipeptide permease D from Citrobacter rodentium (strain ICC168) (Citrobacter freundii biotype 4280).